A 439-amino-acid polypeptide reads, in one-letter code: Xylose isomerase (439 aa).

Active-site residues include His-101 and Asp-104. Mg(2+) is bound by residues Glu-232, Glu-268, His-271, Asp-296, Asp-307, Asp-309, and Asp-339.

This sequence belongs to the xylose isomerase family. As to quaternary structure, homotetramer. It depends on Mg(2+) as a cofactor.

The protein resides in the cytoplasm. The enzyme catalyses alpha-D-xylose = alpha-D-xylulofuranose. This chain is Xylose isomerase (xylA), found in Lactococcus lactis subsp. lactis (strain IL1403) (Streptococcus lactis).